The following is a 439-amino-acid chain: Xylose isomerase (439 aa).

Catalysis depends on residues His-101 and Asp-104. Positions 232, 268, 271, 296, 307, 309, and 339 each coordinate Mg(2+).

The protein belongs to the xylose isomerase family. Homotetramer. Mg(2+) is required as a cofactor.

Its subcellular location is the cytoplasm. It carries out the reaction alpha-D-xylose = alpha-D-xylulofuranose. The chain is Xylose isomerase from Yersinia pestis bv. Antiqua (strain Angola).